Reading from the N-terminus, the 149-residue chain is Transcriptional repressor NrdR (149 aa).

Residues 3 to 34 fold into a zinc finger; the sequence is CPFCCAVDTKVIDSRLVGEGSSVRRRRQCVVC. The ATP-cone domain maps to 49–139; sequence PRVVKSNDVR…VYRSFEDIRE (91 aa).

It belongs to the NrdR family. Requires Zn(2+) as cofactor.

Negatively regulates transcription of bacterial ribonucleotide reductase nrd genes and operons by binding to NrdR-boxes. The sequence is that of Transcriptional repressor NrdR from Erwinia tasmaniensis (strain DSM 17950 / CFBP 7177 / CIP 109463 / NCPPB 4357 / Et1/99).